Consider the following 96-residue polypeptide: MLRLDLQFFASKKGVGSTKNGRDSIAKRLGAKRADGQFVTSGSILYRQRGTKVHPGLNVGRGGDDTLYAKIDGIVRFERLGRDRKRVSVYPVSQEA.

Residues 1–9 constitute a propeptide that is removed on maturation; it reads MLRLDLQFF.

It belongs to the bacterial ribosomal protein bL27 family. Post-translationally, the N-terminus is cleaved by ribosomal processing cysteine protease Prp.

The chain is Large ribosomal subunit protein bL27 from Geobacillus kaustophilus (strain HTA426).